The sequence spans 392 residues: Homeobox protein engrailed-1 (392 aa).

Disordered stretches follow at residues 1-100 (MEEQ…AQLH), 132-164 (ARGG…TRAP), 219-251 (KPSD…PAIL), and 282-306 (SDRP…DKRP). Low complexity predominate over residues 14 to 36 (SALGAAAAATPGGLSLSLSPGAS). 2 stretches are compositionally biased toward pro residues: residues 51–66 (SPQP…PCLP) and 75–84 (PPHPPPPPPQ). The span at 85–100 (HLAAPAHQPQPAAQLH) shows a compositional bias: low complexity. Residues 223–236 (TGGGGSGGGAGSPG) are compositionally biased toward gly residues. The homeobox DNA-binding region spans 303–362 (DKRPRTAFTAEQLQRLKAEFQANRYITEQRRQTLAQELSLNESQIKIWFQNKRAKIKKAT).

Belongs to the engrailed homeobox family.

Its subcellular location is the nucleus. Functionally, required for proper formation of the apical ectodermal ridge and correct dorsal-ventral patterning in the limb. The polypeptide is Homeobox protein engrailed-1 (EN1) (Homo sapiens (Human)).